A 386-amino-acid chain; its full sequence is Diels-Alderase phm7 (386 aa).

The beta-sandwich motif stretch occupies residues 1–223; it reads MSEPTSSSSL…MVRGWSARPW (223 aa). Positions 51, 84, and 356 each coordinate substrate. The segment at 223-386 is beta-barrel motif; the sequence is WPTFMNDAYY…FGGQLQIPVP (164 aa).

It belongs to the Diels-Alderase family.

The protein operates within secondary metabolite biosynthesis. Its activity is regulated as follows. 3-aminomethyl-p-menthane which is similar to the phomasetin substructure, dose-dependently inhibits phm7 activity in vitro and production of phomasetin in the fungus. Functionally, diels-Alderase; part of the gene cluster that mediates the biosynthesis of the trans-fused decalin-containing tetramic acid phomasetin, the stereochemical opposite of the HIV-1 integrase inhibitor equisetin. The PKS module of phm1 together with the enoylreductase phm4 catalyze the formation of the polyketide unit which is then conjugated to L-serine by the condensation domain of the phm1 NRPS module. Activity of the Dieckmann cyclase domain (RED) of phm1 results in release of the Dieckmann product intermediate. The Diels-Alderase phm7 then uses the Dieckmann product of phm1 as substrate and catalyzes the Diels-Alder cycloaddition to form the decalin ring of N-desmethylphomasetin. N-desmethylphomasetin is further methylated to phomasetin by the methyltransferase phm5. The sequence is that of Diels-Alderase phm7 from Pyrenochaetopsis sp.